A 369-amino-acid chain; its full sequence is Uroporphyrinogen decarboxylase (369 aa).

Residues 28 to 32, Asp78, Tyr154, Ser209, and His339 each bind substrate; that span reads RQAGR.

Belongs to the uroporphyrinogen decarboxylase family. In terms of assembly, homodimer.

Its subcellular location is the cytoplasm. It carries out the reaction uroporphyrinogen III + 4 H(+) = coproporphyrinogen III + 4 CO2. The protein operates within porphyrin-containing compound metabolism; protoporphyrin-IX biosynthesis; coproporphyrinogen-III from 5-aminolevulinate: step 4/4. In terms of biological role, catalyzes the decarboxylation of four acetate groups of uroporphyrinogen-III to yield coproporphyrinogen-III. The chain is Uroporphyrinogen decarboxylase from Polaromonas naphthalenivorans (strain CJ2).